Consider the following 276-residue polypeptide: Transcriptional antiactivator ExsD (276 aa).

As to quaternary structure, can form homotrimer. Interacts with ExsA; this interaction inhibits ExsA activity. Interacts with ExsC; this interaction dissociates the ExsD-ExsA complex.

In terms of biological role, negative regulator of the type III secretion system regulon. Acts by disrupting transcriptional activator ExsA self-association and DNA-binding activity in absence of inducing signals. Upon host cell contact, this interaction is disrupted by the anti-antiactivator protein ExsC leading to ExsA activation. The sequence is that of Transcriptional antiactivator ExsD (exsD) from Pseudomonas aeruginosa (strain ATCC 15692 / DSM 22644 / CIP 104116 / JCM 14847 / LMG 12228 / 1C / PRS 101 / PAO1).